A 101-amino-acid polypeptide reads, in one-letter code: Large ribosomal subunit protein uL23 (101 aa).

This sequence belongs to the universal ribosomal protein uL23 family. In terms of assembly, part of the 50S ribosomal subunit. Contacts protein L29, and trigger factor when it is bound to the ribosome.

Functionally, one of the early assembly proteins it binds 23S rRNA. One of the proteins that surrounds the polypeptide exit tunnel on the outside of the ribosome. Forms the main docking site for trigger factor binding to the ribosome. The protein is Large ribosomal subunit protein uL23 of Mannheimia succiniciproducens (strain KCTC 0769BP / MBEL55E).